A 94-amino-acid chain; its full sequence is Acylphosphatase (94 aa).

Residues Arg8–Lys94 form the Acylphosphatase-like domain. Active-site residues include Arg23 and Asn41.

It belongs to the acylphosphatase family.

It catalyses the reaction an acyl phosphate + H2O = a carboxylate + phosphate + H(+). This chain is Acylphosphatase (acyP), found in Frankia alni (strain DSM 45986 / CECT 9034 / ACN14a).